Here is an 82-residue protein sequence, read N- to C-terminus: Sulfur carrier protein TusA (82 aa).

Cys19 functions as the Cysteine persulfide intermediate in the catalytic mechanism.

Belongs to the sulfur carrier protein TusA family.

The protein resides in the cytoplasm. Functionally, sulfur carrier protein which probably makes part of a sulfur-relay system. The chain is Sulfur carrier protein TusA from Photobacterium profundum (strain SS9).